We begin with the raw amino-acid sequence, 199 residues long: Protein shisa-like-1 (199 aa).

The first 25 residues, 1–25 (MTSCGQQSLNVLAVLFSLLFSAVLS), serve as a signal peptide directing secretion. The Extracellular portion of the chain corresponds to 26–97 (AHFRVCEPYT…SEGYMHNNYT (72 aa)). 2 N-linked (GlcNAc...) asparagine glycosylation sites follow: N53 and N95. Residues 98–118 (ALLGVWIYGFFVLMLLVLDLL) traverse the membrane as a helical segment. The Cytoplasmic portion of the chain corresponds to 119-199 (YYSAMNYDIC…PLMTFQSSSA (81 aa)). Residues 146–199 (PRRWGNPARAPRPGQRAPQPQPPPGPLPQAPQAVHTLRGDAHSPPLMTFQSSSA) form a disordered region. The span at 152–163 (PARAPRPGQRAP) shows a compositional bias: low complexity. Over residues 164-174 (QPQPPPGPLPQ) the composition is skewed to pro residues.

Belongs to the shisa family.

Its subcellular location is the membrane. This Homo sapiens (Human) protein is Protein shisa-like-1.